Here is a 124-residue protein sequence, read N- to C-terminus: Small ribosomal subunit protein bS6 (124 aa).

It belongs to the bacterial ribosomal protein bS6 family.

Functionally, binds together with bS18 to 16S ribosomal RNA. The chain is Small ribosomal subunit protein bS6 from Bordetella avium (strain 197N).